A 106-amino-acid polypeptide reads, in one-letter code: uncharacterized protein (106 aa).

It belongs to the SUI1 family.

This is an uncharacterized protein from Haemophilus influenzae (strain ATCC 51907 / DSM 11121 / KW20 / Rd).